Reading from the N-terminus, the 158-residue chain is C-type lectin TsL (158 aa).

The N-terminal stretch at 1–23 is a signal peptide; it reads MGRFIFVSFGLLVVFLSLSGAKG. The C-type lectin domain occupies 24–158; it reads SCCTNDSLPM…KNSFLCQCKF (135 aa). 4 disulfides stabilise this stretch: C26–C37, C54–C154, C61–C156, and C129–C146. N-linked (GlcNAc...) (high mannose) asparagine glycosylation occurs at N28. Residues Q119, D121, E127, N142, and D143 each coordinate Ca(2+). Residues 119 to 121 carry the Galactose-binding motif; the sequence is QPD.

This sequence belongs to the true venom lectin family. As to quaternary structure, homodimer; disulfide-linked. In terms of tissue distribution, expressed by the venom gland.

The protein resides in the secreted. Galactose-binding protein which recognizes specific carbohydrate structures and agglutinates a variety of animal cells by binding to cell-surface glycoproteins and glycolipids. May be a calcium-dependent lectin. This Trimeresurus stejnegeri (Chinese green tree viper) protein is C-type lectin TsL.